Here is a 465-residue protein sequence, read N- to C-terminus: Spermidine/putrescine import ATP-binding protein PotA (465 aa).

Residues 1–18 (MTATSGARTSDARTSGAR) show a composition bias toward polar residues. A disordered region spans residues 1 to 21 (MTATSGARTSDARTSGARTSD). An ABC transporter domain is found at 30 to 264 (IELVGVAKDY…PRTRFVAGFI (235 aa)). 66–73 (GPSGCGKS) contributes to the ATP binding site.

The protein belongs to the ABC transporter superfamily. Spermidine/putrescine importer (TC 3.A.1.11.1) family. As to quaternary structure, the complex is composed of two ATP-binding proteins (PotA), two transmembrane proteins (PotB and PotC) and a solute-binding protein (PotD).

It is found in the cell membrane. It carries out the reaction ATP + H2O + polyamine-[polyamine-binding protein]Side 1 = ADP + phosphate + polyamineSide 2 + [polyamine-binding protein]Side 1.. In terms of biological role, part of the ABC transporter complex PotABCD involved in spermidine/putrescine import. Responsible for energy coupling to the transport system. This chain is Spermidine/putrescine import ATP-binding protein PotA, found in Frankia alni (strain DSM 45986 / CECT 9034 / ACN14a).